A 206-amino-acid chain; its full sequence is Guanylate kinase (206 aa).

Residues 13–193 enclose the Guanylate kinase-like domain; the sequence is PLLLVVSGPS…AVSEIMSIIS (181 aa). ATP is bound at residue 20 to 27; it reads GPSGVGKD.

The protein belongs to the guanylate kinase family.

Its subcellular location is the cytoplasm. It catalyses the reaction GMP + ATP = GDP + ADP. Its function is as follows. Essential for recycling GMP and indirectly, cGMP. The sequence is that of Guanylate kinase from Dehalococcoides mccartyi (strain ATCC BAA-2266 / KCTC 15142 / 195) (Dehalococcoides ethenogenes (strain 195)).